Consider the following 155-residue polypeptide: Small ribosomal subunit protein uS7 (155 aa).

It belongs to the universal ribosomal protein uS7 family. In terms of assembly, part of the 30S ribosomal subunit. Contacts proteins S9 and S11.

Functionally, one of the primary rRNA binding proteins, it binds directly to 16S rRNA where it nucleates assembly of the head domain of the 30S subunit. Is located at the subunit interface close to the decoding center, probably blocks exit of the E-site tRNA. In Pseudothermotoga lettingae (strain ATCC BAA-301 / DSM 14385 / NBRC 107922 / TMO) (Thermotoga lettingae), this protein is Small ribosomal subunit protein uS7.